Consider the following 208-residue polypeptide: Exosome complex component CSL4 homolog (208 aa).

Component of the RNA exosome complex. As to expression, ubiquitously expressed.

Its subcellular location is the nucleus. The protein resides in the nucleolus. It localises to the nucleoplasm. Functionally, non-catalytic component of the RNA exosome complex which has 3'-&gt;5' exoribonuclease activity and participates in a multitude of cellular RNA processing and degradation events. Involved in regulation of antisense ribosomal siRNA production. Involved in response to cold-warm shock. The protein is Exosome complex component CSL4 homolog of Caenorhabditis elegans.